A 75-amino-acid chain; its full sequence is Protein SlyX homolog (75 aa).

It belongs to the SlyX family.

This chain is Protein SlyX homolog, found in Chromobacterium violaceum (strain ATCC 12472 / DSM 30191 / JCM 1249 / CCUG 213 / NBRC 12614 / NCIMB 9131 / NCTC 9757 / MK).